The following is a 299-amino-acid chain: MSNDIDLIKRLGPSAMDQIMLYLAFSAMRTSGHRHGAFLDAAATAAKCAIYMTYLEQGQNLRMTGHLHHLEPKRVKIIVEEVRQALMEGKLLKTLGSQEPRYLIQFPYVWMEQYPWIPGRSRIPGTSLTSEEKRQIEHKLPSNLPDAQLVTSFEFLELIEFLHKRSQEDLPPEHRMELSEALAEHIKRRLLYSGTVTRIDSPWGMPFYALTRPFYAPADDQERTYIMVEDTARYFRMMKDWAEKRPNAMRALEELDVPPERWDEAMQELDEIIRTWADKYHQVGGIPMILQMVFGRKED.

The DNA-binding domain stretch occupies residues Met-1–Gln-98. Residues Arg-34–Asp-40 and Asn-60–Lys-76 each bind DNA. Positions Glu-99 to Ala-216 are flap domain. Ser-152 is a catalytic residue. Residue Ser-179–Ala-181 participates in DNA binding. Residues Pro-217–Asp-299 form a hood domain region.

Belongs to the peptidase S48 family. Upon expression in E.coli most protein is monomeric, although varying amounts of homodimer can be seen. Homodimer; disulfide-linked. Homodimer. Binds the 6 residue C-terminal peptide of PatS; one peptide binds to each subunit. In bacterial two-hybrid assays interacts robustly with itself, Alr2902 and Alr3234 and more weakly with Als1930. Probably autodegrades.

With respect to regulation, protease activity is inhibited by PMSF, suggesting this is a serine protease. In terms of biological role, controls heterocyst differentiation. Dimerization is required for DNA-binding. Has both a protease and a DNA-binding activity. Controls heterocyst differentiation; increased expression leads to more heterocysts than usual. Has protease activity. Binds the promoter regions of hetR, hepA and patS and is required for their expression. Dimerization is required for DNA-binding, DNA-binding is inhibited by the PatS6 peptide. Binds the inverted repeat 5'-GTAGGCGAGGGGTCTAACCCCTCATTACC-3' found in the hetP promoter, required for expression of hetP. The chain is DNA-binding transcriptional activator HetR from Nostoc sp. (strain PCC 7120 / SAG 25.82 / UTEX 2576).